The following is a 467-amino-acid chain: UDP-N-acetylmuramate--L-alanine ligase (467 aa).

114–120 is a binding site for ATP; sequence GTHGKTT.

It belongs to the MurCDEF family.

The protein resides in the cytoplasm. It catalyses the reaction UDP-N-acetyl-alpha-D-muramate + L-alanine + ATP = UDP-N-acetyl-alpha-D-muramoyl-L-alanine + ADP + phosphate + H(+). It participates in cell wall biogenesis; peptidoglycan biosynthesis. Its function is as follows. Cell wall formation. This Azorhizobium caulinodans (strain ATCC 43989 / DSM 5975 / JCM 20966 / LMG 6465 / NBRC 14845 / NCIMB 13405 / ORS 571) protein is UDP-N-acetylmuramate--L-alanine ligase.